The primary structure comprises 475 residues: Putative F-box protein At3g58960 (475 aa).

Residues 1 to 49 (MDRISSLSNDIISNIVSFLSAKDAAVASVLSKRWQNIYTIVPNLEFDNT) form the F-box domain.

The protein is Putative F-box protein At3g58960 of Arabidopsis thaliana (Mouse-ear cress).